Here is a 355-residue protein sequence, read N- to C-terminus: Nematocyst expressed protein 3 (355 aa).

The first 18 residues, 1–18 (MKLTYILLIAVVGVAIEA), serve as a signal peptide directing secretion. 3 consecutive ShKT domains span residues 50–89 (CKDV…CKLC), 107–134 (QPQQ…CQLC), and 140–182 (SGPV…CNTY). 6 disulfides stabilise this stretch: Cys-50–Cys-89, Cys-57–Cys-82, Cys-71–Cys-86, Cys-116–Cys-131, Cys-149–Cys-175, and Cys-158–Cys-179. A propeptide spanning residues 92 to 355 (KRSKKQSDYM…KKSKSHKKQH (264 aa)) is cleaved from the precursor. Residues 202-355 (YQPNAMPTPP…KKSKSHKKQH (154 aa)) form a disordered region. Over residues 207–221 (MPTPPQGVTPAPLPP) the composition is skewed to pro residues. Composition is skewed to low complexity over residues 222–232 (YFQQQGYGYPQ), 240–270 (VQPG…TTTE), and 277–332 (TEAA…AQSD). Basic residues predominate over residues 335 to 355 (NKKKHKKDKAQKKSKSHKKQH).

Belongs to the NEP3 family. In terms of tissue distribution, nematocytes. In late planulae, transcripts are found throughout the ectoderm in nematocytes, with high concentration of expressing cells in the oral pole. In primary polyps, is expressed in nematocytes in the body wall and physa ectoderm and in the upper and lower pharynx.

It localises to the nematocyst. Its subcellular location is the secreted. In terms of biological role, neurotoxin. In vivo, induces pronounced contraction and tail twitching on zebrafish larvae, as well as death 5 hours later. The polypeptide is Nematocyst expressed protein 3 (Nematostella vectensis (Starlet sea anemone)).